Reading from the N-terminus, the 1871-residue chain is Plexin-A3 (1871 aa).

The first 19 residues, 1–19 (MPSVCLLLLLFLAVGGALG), serve as a signal peptide directing secretion. The region spanning 20–488 (NRPFRAFVVT…SEKQVSQLPV (469 aa)) is the Sema domain. The Extracellular segment spans residues 20–1220 (NRPFRAFVVT…SAERALTLPA (1201 aa)). Asparagine 59 carries N-linked (GlcNAc...) asparagine glycosylation. Intrachain disulfides connect cysteine 77–cysteine 86, cysteine 112–cysteine 120, cysteine 266–cysteine 387, cysteine 282–cysteine 338, cysteine 356–cysteine 375, cysteine 491–cysteine 508, cysteine 497–cysteine 539, cysteine 500–cysteine 517, and cysteine 511–cysteine 523. N-linked (GlcNAc...) asparagine glycosylation is present at asparagine 548. Cysteine 574 and cysteine 594 are disulfide-bonded. Asparagine 637, asparagine 738, and asparagine 746 each carry an N-linked (GlcNAc...) asparagine glycan. IPT/TIG domains are found at residues 840–933 (PRIT…YSFV), 935–1020 (PTFD…YTYT), 1023–1122 (PTVT…FTYY), and 1125–1211 (PSFE…LHIS). N-linked (GlcNAc...) asparagine glycans are attached at residues asparagine 1009, asparagine 1036, asparagine 1073, asparagine 1115, and asparagine 1162. Residues 1221–1241 (MMGLAAGGGLLLLAITAVLVA) traverse the membrane as a helical segment. Residues 1242 to 1871 (YKRKTQDADR…QIISLVSSDS (630 aa)) are Cytoplasmic-facing. At serine 1596 the chain carries Phosphoserine.

It belongs to the plexin family. Interacts with CBFA2T3/MTG16.

It is found in the cell membrane. Coreceptor for SEMA3A and SEMA3F. Necessary for signaling by class 3 semaphorins and subsequent remodeling of the cytoskeleton. Plays a role in axon guidance in the developing nervous system. Regulates the migration of sympathetic neurons, but not of neural crest precursors. Required for normal dendrite spine morphology in pyramidal neurons. May play a role in regulating semaphorin-mediated programmed cell death in the developing nervous system. Class 3 semaphorins bind to a complex composed of a neuropilin and a plexin. The plexin modulates the affinity of the complex for specific semaphorins, and its cytoplasmic domain is required for the activation of down-stream signaling events in the cytoplasm. This is Plexin-A3 (PLXNA3) from Homo sapiens (Human).